The primary structure comprises 265 residues: MSDLISALLLGILEGLTEFLPISSTGHLLIAEQWLGRRSDFFNIVIQAGAILAICLALRQRLWSLATGLGERANRDYVLKVGVAFLVTAVVGLIVRKAGWQLPETLQPVAWALLIGGVWMLVAEHFAGKLPERDVVTWKVAIAVGLAQVVAGVFPGTSRSASTIFIAMLLGLSKRSAAADFVFMVGIPTMFAASGYALLEMYKEGGFGTENWADVAVAFVAATITGFVVVKWLLGYIKKHRFTVFAVYRMLLGAALLLWLPAAAG.

Helical transmembrane passes span 38–58 (RSDFFNIVIQAGAILAICLAL), 75–95 (RDYVLKVGVAFLVTAVVGLIV), 108–128 (PVAWALLIGGVWMLVAEHFAG), 135–155 (VVTWKVAIAVGLAQVVAGVFP), 181–201 (FVFMVGIPTMFAASGYALLEM), 215–235 (VAVAFVAATITGFVVVKWLLG), and 244–264 (VFAVYRMLLGAALLLWLPAAA).

It belongs to the UppP family.

It is found in the cell inner membrane. It carries out the reaction di-trans,octa-cis-undecaprenyl diphosphate + H2O = di-trans,octa-cis-undecaprenyl phosphate + phosphate + H(+). Catalyzes the dephosphorylation of undecaprenyl diphosphate (UPP). Confers resistance to bacitracin. In Xanthomonas axonopodis pv. citri (strain 306), this protein is Undecaprenyl-diphosphatase.